A 516-amino-acid chain; its full sequence is Putative GTP-binding protein 6 (516 aa).

Low complexity predominate over residues 18–39; that stretch reads GRGRSAPRAAAPSCPARALAAV. The tract at residues 18–82 is disordered; sequence GRGRSAPRAA…PEDADENAEE (65 aa). The span at 57–67 shows a compositional bias: basic and acidic residues; that stretch reads LRADGGRSRTG. A compositionally biased stretch (acidic residues) spans 68-82; the sequence is DDEEEPEDADENAEE. A Hflx-type G domain is found at 295–459; it reads PVISVVGYTN…ELDAAVLKAT (165 aa). GTP is bound by residues 301 to 308, 327 to 331, 349 to 352, 418 to 421, and 437 to 439; these read GYTNCGKT, FATLD, DTIG, NKVD, and SAL. Mg(2+) is bound by residues Thr-308 and Thr-329.

The protein belongs to the TRAFAC class OBG-HflX-like GTPase superfamily. HflX GTPase family. Mg(2+) is required as a cofactor. Ubiquitously expressed.

The sequence is that of Putative GTP-binding protein 6 (GTPBP6) from Homo sapiens (Human).